A 38-amino-acid polypeptide reads, in one-letter code: NWSWCSGSGEGCDYHSECCGERCCIESMCIGDGVACWP.

Disulfide bonds link C5–C19, C12–C24, C18–C29, and C23–C36.

It belongs to the conotoxin I1 superfamily. In terms of tissue distribution, expressed by the venom duct.

Its subcellular location is the secreted. In terms of biological role, iota-conotoxins bind to voltage-gated sodium channels (Nav) and act as agonists by shifting the voltage-dependence of activation to more hyperpolarized levels. Produces general excitatory symptoms. This chain is Iota-conotoxin-like L11.5, found in Conus lynceus (Lynceus cone).